The primary structure comprises 124 residues: DLWQFGQMMNDVMREYVVFNYLYYGCYCGWGGIGKPRDATDRCCFVHDCCYGKVTGCNPKTDSYTYTYSEENGDVVCGGDDLCKKQICECDRVAATCFRDNKDTYDTKYWLYGAKNCQEESEPC.

7 disulfide bridges follow: C26–C117, C28–C44, C43–C97, C49–C124, C50–C90, C57–C83, and C77–C88. 3 residues coordinate Ca(2+): Y27, G29, and G31. H47 is an active-site residue. D48 provides a ligand contact to Ca(2+). Residue E89 is part of the active site.

The protein belongs to the phospholipase A2 family. Group II subfamily. D49 sub-subfamily. The cofactor is Ca(2+). Expressed by the venom gland.

It localises to the secreted. It catalyses the reaction a 1,2-diacyl-sn-glycero-3-phosphocholine + H2O = a 1-acyl-sn-glycero-3-phosphocholine + a fatty acid + H(+). Snake venom phospholipase A2 (PLA2) that inhibits collagen- and ADP-induced platelet aggregation. PLA2 catalyzes the calcium-dependent hydrolysis of the 2-acyl groups in 3-sn-phosphoglycerides. The polypeptide is Acidic phospholipase A2 (Bothrops jararaca (Jararaca)).